The primary structure comprises 89 residues: Small ribosomal subunit protein uS15 (89 aa).

Belongs to the universal ribosomal protein uS15 family. Part of the 30S ribosomal subunit. Forms a bridge to the 50S subunit in the 70S ribosome, contacting the 23S rRNA.

Functionally, one of the primary rRNA binding proteins, it binds directly to 16S rRNA where it helps nucleate assembly of the platform of the 30S subunit by binding and bridging several RNA helices of the 16S rRNA. In terms of biological role, forms an intersubunit bridge (bridge B4) with the 23S rRNA of the 50S subunit in the ribosome. This Streptococcus pyogenes serotype M2 (strain MGAS10270) protein is Small ribosomal subunit protein uS15.